The primary structure comprises 117 residues: Minor capsid protein p17 (117 aa).

Residue N12 is glycosylated (N-linked (GlcNAc...) asparagine; by host). A helical transmembrane segment spans residues 39–59 (AILLGILILLVIILIIVAIVY). Residues 96-117 (KNSTSQQSHIPSDEQLAELAHS) form a disordered region. N97 is a glycosylation site (N-linked (GlcNAc...) asparagine; by host).

This sequence belongs to the asfivirus minor capsid protein p17 family. In terms of assembly, interacts with the minor capsid protein M1249L and with the hexon capsid protein p72 capsomers; these interactions form a rigid zipper structure that stabilizes the capsomers. Interacts with host STING1.

Its subcellular location is the virion membrane. The protein resides in the host endoplasmic reticulum membrane. Together with the penton and the other minor capsid proteins (M1249L, p49), forms a complicated network immediately below the outer capsid shell, stabilizing the whole capsid. Three copies of p17 encircle each p72 capsomer in the inner capsid shell, anchoring p72 capsomers on the inner membrane. Required for the assembly of the capsid and icosahedral morphogenesis. Additionally, inhibits the host cGAS-STING pathway through its interaction with STING1 and subsequent interference of the recruitment of downstream components TBK1 and IKBKE. The protein is Minor capsid protein p17 of African swine fever virus (isolate Tick/South Africa/Pretoriuskop Pr4/1996) (ASFV).